The chain runs to 50 residues: Thymosin beta-4 (50 aa).

The segment at 1–50 (MLLPATMSDKPDMAEIEKFDKSKLKKTETQEKNPLPSKETIEQEKQAGES) is disordered. Ser8 is modified (phosphoserine). A compositionally biased stretch (basic and acidic residues) spans 9 to 31 (DKPDMAEIEKFDKSKLKKTETQE). Residue Lys10 is modified to N6-acetyllysine. Lys18 is subject to N6-acetyllysine; alternate. Lys18 participates in a covalent cross-link: Glycyl lysine isopeptide (Lys-Gly) (interchain with G-Cter in SUMO2); alternate. The residue at position 29 (Thr29) is a Phosphothreonine. At Lys32 the chain carries N6-acetyllysine. Ser37 bears the Phosphoserine mark. Lys38 bears the N6-acetyllysine mark. Residues 39 to 50 (ETIEQEKQAGES) show a composition bias toward basic and acidic residues. Thr40 bears the Phosphothreonine mark. Position 45 is an N6-acetyllysine (Lys45).

This sequence belongs to the thymosin beta family. Identified in a complex composed of ACTA1, COBL, GSN AND TMSB4X. Interacts with SERPINB1. In terms of processing, acSDKP is inactivated by ACE, which removes the dipeptide Lys-Pro from its C-terminus. In terms of tissue distribution, originally found in thymus but it is widely distributed in many tissues.

It localises to the cytoplasm. The protein resides in the cytoskeleton. In terms of biological role, plays an important role in the organization of the cytoskeleton. Binds to and sequesters actin monomers (G actin) and therefore inhibits actin polymerization. Potent inhibitor of bone marrow derived stem cell differentiation. Acts by inhibits the entry of hematopoietic pluripotent stem cells into the S-phase. The chain is Thymosin beta-4 (Tmsb4x) from Mus musculus (Mouse).